The primary structure comprises 650 residues: Chaperone protein DnaK (650 aa).

Thr200 is subject to Phosphothreonine; by autocatalysis.

Belongs to the heat shock protein 70 family.

Acts as a chaperone. This is Chaperone protein DnaK from Paraburkholderia phytofirmans (strain DSM 17436 / LMG 22146 / PsJN) (Burkholderia phytofirmans).